The sequence spans 368 residues: 3-dehydroquinate synthase (368 aa).

Residues 112–116 (GVIGD), 136–137 (TT), Lys-149, and Lys-158 each bind NAD(+). Zn(2+) is bound by residues Glu-191, His-256, and His-273.

It belongs to the sugar phosphate cyclases superfamily. Dehydroquinate synthase family. Co(2+) serves as cofactor. Zn(2+) is required as a cofactor. Requires NAD(+) as cofactor.

It localises to the cytoplasm. It carries out the reaction 7-phospho-2-dehydro-3-deoxy-D-arabino-heptonate = 3-dehydroquinate + phosphate. It functions in the pathway metabolic intermediate biosynthesis; chorismate biosynthesis; chorismate from D-erythrose 4-phosphate and phosphoenolpyruvate: step 2/7. In terms of biological role, catalyzes the conversion of 3-deoxy-D-arabino-heptulosonate 7-phosphate (DAHP) to dehydroquinate (DHQ). The polypeptide is 3-dehydroquinate synthase (Prochlorococcus marinus (strain NATL1A)).